Consider the following 314-residue polypeptide: ATP synthase gamma chain (314 aa).

The protein belongs to the ATPase gamma chain family. In terms of assembly, F-type ATPases have 2 components, CF(1) - the catalytic core - and CF(0) - the membrane proton channel. CF(1) has five subunits: alpha(3), beta(3), gamma(1), delta(1), epsilon(1). CF(0) has three main subunits: a, b and c.

The protein resides in the cellular thylakoid membrane. Functionally, produces ATP from ADP in the presence of a proton gradient across the membrane. The gamma chain is believed to be important in regulating ATPase activity and the flow of protons through the CF(0) complex. This chain is ATP synthase gamma chain, found in Crocosphaera subtropica (strain ATCC 51142 / BH68) (Cyanothece sp. (strain ATCC 51142)).